A 419-amino-acid chain; its full sequence is Histidine--tRNA ligase (419 aa).

Belongs to the class-II aminoacyl-tRNA synthetase family.

The protein resides in the cytoplasm. The catalysed reaction is tRNA(His) + L-histidine + ATP = L-histidyl-tRNA(His) + AMP + diphosphate + H(+). This chain is Histidine--tRNA ligase, found in Pyrobaculum arsenaticum (strain DSM 13514 / JCM 11321 / PZ6).